The chain runs to 119 residues: MICOS complex subunit MIC13 (119 aa).

Residues 1–7 are Mitochondrial matrix-facing; the sequence is MVARVWS. A helical membrane pass occupies residues 8–26; it reads LMRFLIKGSVAGGAVYLVY. Residues 27-119 lie on the Mitochondrial intermembrane side of the membrane; it reads DQELLGPSDK…GWEYLKEHSK (93 aa).

This sequence belongs to the MICOS complex subunit Mic13 family. Component of the mitochondrial contact site and cristae organizing system (MICOS) complex, composed of at least MICOS10/MIC10, CHCHD3/MIC19, CHCHD6/MIC25, APOO/MIC26, MICOS13/MIC13, APOOL/MIC27 and IMMT/MIC60. The MICOS complex associates with mitochondrial outer membrane proteins SAMM50, MTX1 and MTX2 (together described as components of the mitochondrial outer membrane sorting assembly machinery (SAM) complex) and DNAJC11, mitochondrial inner membrane protein TMEM11 and with HSPA9. The MICOS and SAM complexes together with DNAJC11 are part of a large protein complex spanning both membranes termed the mitochondrial intermembrane space bridging (MIB) complex.

Its subcellular location is the mitochondrion inner membrane. Its function is as follows. Component of the MICOS complex, a large protein complex of the mitochondrial inner membrane that plays crucial roles in the maintenance of crista junctions, inner membrane architecture, and formation of contact sites to the outer membrane. Constituent of mature MICOS complex, it is required for the formation of cristae junction (CJ) and maintenance of cristae morphology. Required for the incorporation of MICOS10/MIC10 into the MICOS complex. This Mus musculus (Mouse) protein is MICOS complex subunit MIC13 (Micos13).